Consider the following 168-residue polypeptide: Crossover junction endodeoxyribonuclease RuvC (168 aa).

Catalysis depends on residues aspartate 10, glutamate 70, and aspartate 143. Positions 10, 70, and 143 each coordinate Mg(2+).

Belongs to the RuvC family. As to quaternary structure, homodimer which binds Holliday junction (HJ) DNA. The HJ becomes 2-fold symmetrical on binding to RuvC with unstacked arms; it has a different conformation from HJ DNA in complex with RuvA. In the full resolvosome a probable DNA-RuvA(4)-RuvB(12)-RuvC(2) complex forms which resolves the HJ. Mg(2+) serves as cofactor.

Its subcellular location is the cytoplasm. It catalyses the reaction Endonucleolytic cleavage at a junction such as a reciprocal single-stranded crossover between two homologous DNA duplexes (Holliday junction).. Its function is as follows. The RuvA-RuvB-RuvC complex processes Holliday junction (HJ) DNA during genetic recombination and DNA repair. Endonuclease that resolves HJ intermediates. Cleaves cruciform DNA by making single-stranded nicks across the HJ at symmetrical positions within the homologous arms, yielding a 5'-phosphate and a 3'-hydroxyl group; requires a central core of homology in the junction. The consensus cleavage sequence is 5'-(A/T)TT(C/G)-3'. Cleavage occurs on the 3'-side of the TT dinucleotide at the point of strand exchange. HJ branch migration catalyzed by RuvA-RuvB allows RuvC to scan DNA until it finds its consensus sequence, where it cleaves and resolves the cruciform DNA. The protein is Crossover junction endodeoxyribonuclease RuvC of Thermotoga maritima (strain ATCC 43589 / DSM 3109 / JCM 10099 / NBRC 100826 / MSB8).